A 58-amino-acid polypeptide reads, in one-letter code: UPF0434 protein Sfri_2386 (58 aa).

Belongs to the UPF0434 family.

The sequence is that of UPF0434 protein Sfri_2386 from Shewanella frigidimarina (strain NCIMB 400).